We begin with the raw amino-acid sequence, 382 residues long: Serine/threonine-protein kinase (382 aa).

Positions 1–10 (MENKQCDHLT) are enriched in basic and acidic residues. Residues 1-75 (MENKQCDHLT…ASESDEDDDD (75 aa)) are disordered. A compositionally biased stretch (polar residues) spans 12–24 (WFSTTSDASESMD). Residues 45-75 (ADEDLYSDISEGDLEYSDCDSASESDEDDDD) are compositionally biased toward acidic residues. The Protein kinase domain occupies 93-379 (YTVIKTLTPG…AEELLSYPMF (287 aa)). Residues 99–107 (LTPGSEGRV) and Lys-122 each bind ATP. The active-site Proton acceptor is the Asp-207.

Belongs to the protein kinase superfamily. Ser/Thr protein kinase family.

The catalysed reaction is L-seryl-[protein] + ATP = O-phospho-L-seryl-[protein] + ADP + H(+). It catalyses the reaction L-threonyl-[protein] + ATP = O-phospho-L-threonyl-[protein] + ADP + H(+). This chain is Serine/threonine-protein kinase (US2), found in Equus caballus (Horse).